We begin with the raw amino-acid sequence, 708 residues long: MAERESGLSGGAASPPAASPFLGLHIASPPNFRLTHDISLEEFEDEDLSEITDECGISLQCKDTLSLRPPRAGLLSAGSSGSAGSRLQAEMLQMDLIDAASDTPGAEDDEEDDDELAAQRPGVGPSKAESGQEPASRSQGQGQGPGTGSGDTYRPKRPTTLNLFPQVPRSQDTLNNNSLGKKHSWQDRVSRSSSPLKTGEQTPPHEHICLSDELPPQGSPVPTQDRGTSTDSPCRRTAATQMAPPSGPPATAPGGRGHSHRDRIHYQADVRLEATEEIYLTPVQRPPDPAEPTSTFLPPTESRMSVSSDPDPAAYSVTAGRPHPSISEEDEGFDCLSSPEQAEPPGGGWRGSLGEPPPPPRASLSSDTSALSYDSVKYTLVVDEHAQLELVSLRPCFGDYSDESDSATVYDNCASASSPYESAIGEEYEEAPQPRPPTCLSEDSTPDEPDVHFSKKFLNVFMSGRSRSSSAESFGLFSCVINGEEHEQTHRAIFRFVPRHEDELELEVDDPLLVELQAEDYWYEAYNMRTGARGVFPAYYAIEVTKEPEHMAALAKNSDWIDQFRVKFLGSVQVPYHKGNDVLCAAMQKIATTRRLTVHFNPPSSCVLEISVRGVKIGVKADEAQEAKGNKCSHFFQLKNISFCGYHPKNNKYFGFITKHPADHRFACHVFVSEDSTKALAESVGRAFQQFYKQFVEYTCPTEDIYLE.

The interval 1–26 (MAERESGLSGGAASPPAASPFLGLHI) is disordered. Low complexity predominate over residues 11–24 (GAASPPAASPFLGL). Residues Ser14, Ser28, and Ser39 each carry the phosphoserine modification. The segment at 69–368 (PPRAGLLSAG…PPRASLSSDT (300 aa)) is disordered. Positions 71 to 87 (RAGLLSAGSSGSAGSRL) are enriched in low complexity. Thr103 is modified (phosphothreonine; by MAPK8, MAPK9 and MAPK10). The segment covering 105 to 116 (GAEDDEEDDDEL) has biased composition (acidic residues). The tract at residues 126–282 (SKAESGQEPA…EATEEIYLTP (157 aa)) is JNK-binding domain (JBD). Residue Ser149 is modified to Phosphoserine. Residues 154–173 (RPKRPTTLNLFPQVPRSQDT) are minimal inhibitory domain (MID). Positions 159–179 (TTLNLFPQVPRSQDTLNNNSL) are enriched in polar residues. 5 positions are modified to phosphoserine: Ser178, Ser184, Ser190, Ser192, and Ser193. Positions 191–201 (RSSSPLKTGEQ) are enriched in polar residues. Thr202 bears the Phosphothreonine; by MAPK8, MAPK9 and MAPK10 mark. Phosphoserine is present on Ser211. The segment covering 220–232 (PVPTQDRGTSTDS) has biased composition (polar residues). A compositionally biased stretch (basic and acidic residues) spans 264 to 274 (IHYQADVRLEA). The segment at 280 to 468 (LTPVQRPPDP…NVFMSGRSRS (189 aa)) is interaction with MAP3K7. Residues 292–308 (PTSTFLPPTESRMSVSS) are compositionally biased toward polar residues. A phosphoserine mark is found at Ser308, Ser325, Ser327, Ser337, Ser352, Ser363, Ser366, Ser404, and Ser406. 2 consecutive short sequence motifs (D-box) follow at residues 350-357 (RGSLGEPP) and 361-369 (RASLSSDTS). Position 408 is a phosphothreonine (Thr408). The segment at 426–448 (EEYEEAPQPRPPTCLSEDSTPDE) is disordered. 2 positions are modified to phosphoserine: Ser441 and Ser444. Thr445 carries the post-translational modification Phosphothreonine. Phosphoserine is present on residues Ser466, Ser468, Ser469, and Ser470. Residues 468-657 (SSSAESFGLF…PKNNKYFGFI (190 aa)) form an interaction with VRK2 region. The region spanning 485 to 546 (EHEQTHRAIF…PAYYAIEVTK (62 aa)) is the SH3 domain. A PID domain is found at 558–697 (SDWIDQFRVK…FQQFYKQFVE (140 aa)).

It belongs to the JIP scaffold family. As to quaternary structure, forms homo- or heterooligomeric complexes. Binds specific components of the JNK signaling pathway namely MAPK8/JNK1, MAPK9/JNK2, MAPK10/JNK3, MAP2K7/MKK7, MAP3K11/MLK3 and DLK1. Also binds the proline-rich domain-containing splice variant of apolipoprotein E receptor 2 (ApoER2). Interacts, via the PID domain, with ARHGEF28. Binds the cytoplasmic tails of LRP1 and LRP2 (Megalin). Binds the TPR motif-containing C-terminal of kinesin light chain, KLC1. Pre-assembled MAPK8IP1 scaffolding complexes are then transported as a cargo of kinesin, to the required subcellular location. Interacts with the cytoplasmic domain of APP. Interacts with DCLK2, VRK2 and MAP3K7/TAK1. Found in a complex with SH3RF1, RAC1, MAP3K11/MLK3, MAP2K7/MKK7 and MAPK8/JNK1. Found in a complex with SH3RF1, RAC2, MAP3K7/TAK1, MAP2K7/MKK7, MAPK8/JNK1 and MAPK9/JNK2. Interacts with SH3RF2. Phosphorylated by MAPK8, MAPK9 and MAPK10. Phosphorylation on Thr-103 is also necessary for the dissociation and activation of MAP3K12. Phosphorylated by VRK2. Hyperphosphorylated during mitosis following activation of stress-activated and MAP kinases. Post-translationally, ubiquitinated. Two preliminary events are required to prime for ubiquitination; phosphorylation and an increased in intracellular calcium concentration. Then, the calcium influx initiates ubiquitination and degradation by the ubiquitin-proteasome pathway. Highly expressed in brain and pancreatic beta-cells. Weaker expression found in kidney.

The protein resides in the cytoplasm. It is found in the perinuclear region. It localises to the nucleus. Its subcellular location is the endoplasmic reticulum membrane. The protein localises to the mitochondrion membrane. Its function is as follows. The JNK-interacting protein (JIP) group of scaffold proteins selectively mediates JNK signaling by aggregating specific components of the MAPK cascade to form a functional JNK signaling module. Required for JNK activation in response to excitotoxic stress. Cytoplasmic MAPK8IP1 causes inhibition of JNK-regulated activity by retaining JNK in the cytoplasm and thus inhibiting the JNK phosphorylation of c-Jun. May also participate in ApoER2-specific reelin signaling. Directly, or indirectly, regulates GLUT2 gene expression and beta-cell function. Appears to have a role in cell signaling in mature and developing nerve terminals. May function as a regulator of vesicle transport, through interactions with the JNK-signaling components and motor proteins. Functions as an anti-apoptotic protein and whose level seems to influence the beta-cell death or survival response. Acts as a scaffold protein that coordinates with SH3RF1 in organizing different components of the JNK pathway, including RAC1 or RAC2, MAP3K11/MLK3 or MAP3K7/TAK1, MAP2K7/MKK7, MAPK8/JNK1 and/or MAPK9/JNK2 into a functional multiprotein complex to ensure the effective activation of the JNK signaling pathway. Regulates the activation of MAPK8/JNK1 and differentiation of CD8(+) T-cells. This chain is C-Jun-amino-terminal kinase-interacting protein 1 (Mapk8ip1), found in Rattus norvegicus (Rat).